The following is a 151-amino-acid chain: Extracellular globin-4 (151 aa).

The Globin domain maps to 6 to 151 (CCSYEDRREI…LVARIAKDLP (146 aa)). Cys7 and Cys138 are oxidised to a cystine. Residue His101 participates in heme b binding.

The protein belongs to the globin family. As to quaternary structure, the extracellular hemoglobin of the earthworm consists of 12 subunits that have a hexagonal bilayer structure with a molecular weight near 3.8 million. Each one-twelfth subunit is composed primarily of disulfide linked trimers (chains A, B, and C) and monomers (chain D).

The protein localises to the secreted. This is Extracellular globin-4 from Lumbricus terrestris (Common earthworm).